The sequence spans 402 residues: Tryptophan--tRNA ligase, cytoplasmic (402 aa).

A 'HIGH' region motif is present at residues 97 to 106; the sequence is PSSEALHLGH. Residues 280-284 carry the 'KMSKS' region motif; the sequence is KMSAS.

The protein belongs to the class-I aminoacyl-tRNA synthetase family.

It localises to the cytoplasm. Its subcellular location is the cytosol. The enzyme catalyses tRNA(Trp) + L-tryptophan + ATP = L-tryptophyl-tRNA(Trp) + AMP + diphosphate + H(+). This Arabidopsis thaliana (Mouse-ear cress) protein is Tryptophan--tRNA ligase, cytoplasmic.